Here is a 97-residue protein sequence, read N- to C-terminus: Ribosomal biogenesis factor (97 aa).

Residue S19 is modified to Phosphoserine. K21 is modified (N6-acetyllysine). Residue S69 is modified to Phosphoserine.

As to quaternary structure, associates with the pre-60S ribosomal particles.

The protein localises to the nucleus. The protein resides in the nucleolus. In terms of biological role, trans-acting factor in ribosome biogenesis required for efficient 40S and 60S subunit production. This Mus musculus (Mouse) protein is Ribosomal biogenesis factor (Rbis).